Consider the following 515-residue polypeptide: 2-isopropylmalate synthase (515 aa).

In terms of domain architecture, Pyruvate carboxyltransferase spans 4–266 (IKIFDTTLRD…ETGLILKETK (263 aa)). Residues Asp-13, His-201, His-203, and Asn-237 each coordinate Mn(2+). Residues 392 to 515 (KLIQFGVSYD…ANLTRLVYES (124 aa)) are regulatory domain.

The protein belongs to the alpha-IPM synthase/homocitrate synthase family. LeuA type 1 subfamily. In terms of assembly, homodimer. It depends on Mn(2+) as a cofactor.

The protein resides in the cytoplasm. The catalysed reaction is 3-methyl-2-oxobutanoate + acetyl-CoA + H2O = (2S)-2-isopropylmalate + CoA + H(+). It functions in the pathway amino-acid biosynthesis; L-leucine biosynthesis; L-leucine from 3-methyl-2-oxobutanoate: step 1/4. Its function is as follows. Catalyzes the condensation of the acetyl group of acetyl-CoA with 3-methyl-2-oxobutanoate (2-ketoisovalerate) to form 3-carboxy-3-hydroxy-4-methylpentanoate (2-isopropylmalate). This chain is 2-isopropylmalate synthase, found in Oceanobacillus iheyensis (strain DSM 14371 / CIP 107618 / JCM 11309 / KCTC 3954 / HTE831).